Consider the following 331-residue polypeptide: Mitochondrial respiration co-chaperone MRJ1 (331 aa).

The transit peptide at 1–36 directs the protein to the mitochondrion; it reads MLSFQATVRPLAVSSRLHSPAAHIWRRNAHTAAMSD. The interval 35–66 is disordered; the sequence is SDDSLDQGSSSSYGDSASQPHLGKGKGRQDSL. Residues 40–53 show a composition bias toward low complexity; the sequence is DQGSSSSYGDSASQ. Residues 83–147 form the J domain; the sequence is DPFEVMALDR…SSRSAFLKTG (65 aa). Residues 203–226 form a disordered region; that stretch reads DGSQGWRPYEDPSKGFSPPTSGPA. Positions 275–303 constitute an IQ domain; that stretch reads RALAQARYEAATHGHIRREQIRRRVREAE.

It belongs to the DnaJ family. In terms of assembly, interacts with QCR2.

It is found in the mitochondrion. Its function is as follows. Mitochondrial co-chaperone required for ubiquinol-cytochrome c oxidoreductase (mitochondrial respiratory chain complex III) activity. In Cryptococcus neoformans var. grubii serotype A (strain H99 / ATCC 208821 / CBS 10515 / FGSC 9487) (Filobasidiella neoformans var. grubii), this protein is Mitochondrial respiration co-chaperone MRJ1.